Here is a 308-residue protein sequence, read N- to C-terminus: Maspardin (308 aa).

Residues 87–159 form the AB hydrolase-1 domain; sequence FCDGFRKLLD…NSFWLMPAFM (73 aa). At Ser-304 the chain carries Phosphoserine.

Belongs to the AB hydrolase superfamily. Interacts with CD4. Interacts with ALDH16A1. Expressed in cell lines FT.1 and in a L cell fibroblast derivative (at protein level).

It localises to the cytoplasm. Its function is as follows. May play a role as a negative regulatory factor in CD4-dependent T-cell activation. This chain is Maspardin (Spg21), found in Mus musculus (Mouse).